A 147-amino-acid chain; its full sequence is Acidic phospholipase A2 S7-48J (147 aa).

Positions 1 to 19 (MYPAHLLVLLAVCVSLLGA) are cleaved as a signal peptide. The propeptide occupies 20–27 (SDIPPQPL). 7 disulfides stabilise this stretch: cysteine 38–cysteine 99, cysteine 54–cysteine 146, cysteine 56–cysteine 72, cysteine 71–cysteine 127, cysteine 78–cysteine 120, cysteine 88–cysteine 113, and cysteine 106–cysteine 118. 3 residues coordinate Ca(2+): tyrosine 55, glycine 57, and glycine 59. Histidine 75 is an active-site residue. Aspartate 76 lines the Ca(2+) pocket. Aspartate 121 is a catalytic residue.

The protein belongs to the phospholipase A2 family. Group I subfamily. D49 sub-subfamily. It depends on Ca(2+) as a cofactor. Expressed by the venom gland.

It is found in the secreted. It catalyses the reaction a 1,2-diacyl-sn-glycero-3-phosphocholine + H2O = a 1-acyl-sn-glycero-3-phosphocholine + a fatty acid + H(+). Functionally, snake venom phospholipase A2 (PLA2) that inhibits collagen-induced platelet aggregation. PLA2 catalyzes the calcium-dependent hydrolysis of the 2-acyl groups in 3-sn-phosphoglycerides. This chain is Acidic phospholipase A2 S7-48J, found in Austrelaps superbus (Lowland copperhead snake).